Reading from the N-terminus, the 170-residue chain is Lipoprotein signal peptidase (170 aa).

The next 3 membrane-spanning stretches (helical) occupy residues 9-29 (FNIFIFIISLIFFDQLSKYLV), 72-92 (IFFLAMPIFILIFIFSLSLKE), and 96-118 (IARISLLLIFSGGVGNVIDRLFR). Residues Asp124 and Asp146 contribute to the active site. A helical transmembrane segment spans residues 143–163 (NFADSYVVIGMILFLVYDFFI).

The protein belongs to the peptidase A8 family.

It is found in the cell inner membrane. The catalysed reaction is Release of signal peptides from bacterial membrane prolipoproteins. Hydrolyzes -Xaa-Yaa-Zaa-|-(S,diacylglyceryl)Cys-, in which Xaa is hydrophobic (preferably Leu), and Yaa (Ala or Ser) and Zaa (Gly or Ala) have small, neutral side chains.. The protein operates within protein modification; lipoprotein biosynthesis (signal peptide cleavage). Its function is as follows. This protein specifically catalyzes the removal of signal peptides from prolipoproteins. In Borreliella afzelii (strain PKo) (Borrelia afzelii), this protein is Lipoprotein signal peptidase.